The sequence spans 673 residues: Methionine--tRNA ligase (673 aa).

Positions 13 to 23 match the 'HIGH' region motif; it reads PYANGSIHLGH. Zn(2+) is bound by residues Cys-144, Cys-147, Cys-157, and Cys-160. Positions 330-334 match the 'KMSKS' region motif; that stretch reads KMSKS. Lys-333 is a binding site for ATP. Residues 572–673 form the tRNA-binding domain; that stretch reads DFAQLDLRIA…GRARAGMTIS (102 aa).

The protein belongs to the class-I aminoacyl-tRNA synthetase family. MetG type 1 subfamily. As to quaternary structure, homodimer. Zn(2+) serves as cofactor.

The protein resides in the cytoplasm. It catalyses the reaction tRNA(Met) + L-methionine + ATP = L-methionyl-tRNA(Met) + AMP + diphosphate. Functionally, is required not only for elongation of protein synthesis but also for the initiation of all mRNA translation through initiator tRNA(fMet) aminoacylation. The protein is Methionine--tRNA ligase of Dichelobacter nodosus (strain VCS1703A).